A 101-amino-acid chain; its full sequence is MIPGEILTDDGEHELNAGRATLSLVVANTGDRPVQVGSHYHFFEVNDALSFDRAVARGFRLNIAAGTAVRFEPGQTRTVELVALAGERAVYGFQGKVMGPL.

It belongs to the urease beta subunit family. As to quaternary structure, heterotrimer of UreA (gamma), UreB (beta) and UreC (alpha) subunits. Three heterotrimers associate to form the active enzyme.

It is found in the cytoplasm. It catalyses the reaction urea + 2 H2O + H(+) = hydrogencarbonate + 2 NH4(+). Its pathway is nitrogen metabolism; urea degradation; CO(2) and NH(3) from urea (urease route): step 1/1. The sequence is that of Urease subunit beta from Burkholderia orbicola (strain MC0-3).